A 376-amino-acid chain; its full sequence is 4-hydroxy-3-methylbut-2-en-1-yl diphosphate synthase (flavodoxin) (376 aa).

The [4Fe-4S] cluster site is built by Cys-270, Cys-273, Cys-305, and Glu-312.

Belongs to the IspG family. Requires [4Fe-4S] cluster as cofactor.

It catalyses the reaction (2E)-4-hydroxy-3-methylbut-2-enyl diphosphate + oxidized [flavodoxin] + H2O + 2 H(+) = 2-C-methyl-D-erythritol 2,4-cyclic diphosphate + reduced [flavodoxin]. The protein operates within isoprenoid biosynthesis; isopentenyl diphosphate biosynthesis via DXP pathway; isopentenyl diphosphate from 1-deoxy-D-xylulose 5-phosphate: step 5/6. Functionally, converts 2C-methyl-D-erythritol 2,4-cyclodiphosphate (ME-2,4cPP) into 1-hydroxy-2-methyl-2-(E)-butenyl 4-diphosphate. This Colwellia psychrerythraea (strain 34H / ATCC BAA-681) (Vibrio psychroerythus) protein is 4-hydroxy-3-methylbut-2-en-1-yl diphosphate synthase (flavodoxin).